A 155-amino-acid chain; its full sequence is MFLSTYENKIDKKGRVSVPASFRSHLSNLGYNGVICYPSFNNQSIEACSQDRIEKLSASIDSLSPFEEKRDYFATSILSESMNLQFDSEGRISLSTKLLKHAKIKNSMLFVGQGQTFQIWEPAAFEKFKINARKKANLNRASLKWEKHFNNNEGK.

2 SpoVT-AbrB domains span residues 5 to 52 (TYEN…SQDR) and 81 to 124 (SMNL…EPAA).

The protein belongs to the MraZ family. As to quaternary structure, forms oligomers.

It localises to the cytoplasm. Its subcellular location is the nucleoid. This chain is Transcriptional regulator MraZ, found in Pelagibacter ubique (strain HTCC1062).